A 472-amino-acid chain; its full sequence is N-succinylglutamate 5-semialdehyde dehydrogenase 1 (472 aa).

An NAD(+)-binding site is contributed by 209–214 (GGVQAG). Catalysis depends on residues E232 and C266.

This sequence belongs to the aldehyde dehydrogenase family. AstD subfamily.

The enzyme catalyses N-succinyl-L-glutamate 5-semialdehyde + NAD(+) + H2O = N-succinyl-L-glutamate + NADH + 2 H(+). Its pathway is amino-acid degradation; L-arginine degradation via AST pathway; L-glutamate and succinate from L-arginine: step 4/5. Functionally, catalyzes the NAD-dependent reduction of succinylglutamate semialdehyde into succinylglutamate. The polypeptide is N-succinylglutamate 5-semialdehyde dehydrogenase 1 (Caulobacter vibrioides (strain ATCC 19089 / CIP 103742 / CB 15) (Caulobacter crescentus)).